The following is a 168-amino-acid chain: Transcriptional repressor NrdR (168 aa).

Residues 3–34 fold into a zinc finger; it reads CPYCGFAQDRVVDSRESKEADSIRRRRECERC. Residues 49-139 form the ATP-cone domain; sequence YMVVKKDGRR…VYRDFKDVNE (91 aa).

The protein belongs to the NrdR family. Zn(2+) serves as cofactor.

Its function is as follows. Negatively regulates transcription of bacterial ribonucleotide reductase nrd genes and operons by binding to NrdR-boxes. In Acidobacterium capsulatum (strain ATCC 51196 / DSM 11244 / BCRC 80197 / JCM 7670 / NBRC 15755 / NCIMB 13165 / 161), this protein is Transcriptional repressor NrdR.